Reading from the N-terminus, the 202-residue chain is Imidazoleglycerol-phosphate dehydratase (202 aa).

It belongs to the imidazoleglycerol-phosphate dehydratase family.

Its subcellular location is the cytoplasm. The enzyme catalyses D-erythro-1-(imidazol-4-yl)glycerol 3-phosphate = 3-(imidazol-4-yl)-2-oxopropyl phosphate + H2O. It participates in amino-acid biosynthesis; L-histidine biosynthesis; L-histidine from 5-phospho-alpha-D-ribose 1-diphosphate: step 6/9. In Mycolicibacterium gilvum (strain PYR-GCK) (Mycobacterium gilvum (strain PYR-GCK)), this protein is Imidazoleglycerol-phosphate dehydratase.